The chain runs to 390 residues: S-adenosylmethionine synthase (390 aa).

Histidine 17 serves as a coordination point for ATP. Aspartate 19 is a Mg(2+) binding site. K(+) is bound at residue glutamate 45. 2 residues coordinate L-methionine: glutamate 58 and glutamine 101. Residues 101–111 form a flexible loop region; sequence QSPDIGQGVDT. ATP-binding positions include 160 to 162, 226 to 227, aspartate 235, 241 to 242, alanine 258, and lysine 262; these read DGK, RF, and RK. An L-methionine-binding site is contributed by aspartate 235. Lysine 266 is an L-methionine binding site.

Belongs to the AdoMet synthase family. Homotetramer; dimer of dimers. It depends on Mg(2+) as a cofactor. K(+) is required as a cofactor.

It localises to the cytoplasm. The catalysed reaction is L-methionine + ATP + H2O = S-adenosyl-L-methionine + phosphate + diphosphate. Its pathway is amino-acid biosynthesis; S-adenosyl-L-methionine biosynthesis; S-adenosyl-L-methionine from L-methionine: step 1/1. Its function is as follows. Catalyzes the formation of S-adenosylmethionine (AdoMet) from methionine and ATP. The overall synthetic reaction is composed of two sequential steps, AdoMet formation and the subsequent tripolyphosphate hydrolysis which occurs prior to release of AdoMet from the enzyme. In Anaeromyxobacter dehalogenans (strain 2CP-1 / ATCC BAA-258), this protein is S-adenosylmethionine synthase.